The sequence spans 120 residues: uncharacterized protein (120 aa).

This sequence to the N-terminal region of phage HK97/HK620 Gp37/hpaH.

This is an uncharacterized protein from Escherichia coli (strain K12).